A 430-amino-acid chain; its full sequence is Target of rapamycin complex 1 subunit toc1 (430 aa).

Phosphoserine occurs at positions 204 and 399.

As to quaternary structure, the target of rapamycin complex 1 (TORC1) is composed of at least mip1, pop3/wat1, tco89, toc1 and tor2.

It localises to the cytoplasm. Its function is as follows. Component of TORC1, which regulates multiple cellular processes to control cell growth in response to environmental signals. Tor2 is essential for growth. Nutrient limitation and environmental stress signals cause inactivation of TORC1. Active TORC1 positively controls cell growth and ribosome biogenesis by regulating ribosomal protein gene expression. TORC1 negatively controls G1 cell-cycle arrest, sexual development and amino acid uptake. Represses mating, meiosis and sporulation efficiency by interfering with the functions of the transcription factor ste11 and the meiosis-promoting RNA-binding protein mei2. The sequence is that of Target of rapamycin complex 1 subunit toc1 from Schizosaccharomyces pombe (strain 972 / ATCC 24843) (Fission yeast).